The sequence spans 222 residues: 7-cyano-7-deazaguanine synthase (222 aa).

ATP is bound at residue 11–21 (FSGGQDSTTCL). Zn(2+) contacts are provided by Cys-187, Cys-195, Cys-198, and Cys-201.

The protein belongs to the QueC family. It depends on Zn(2+) as a cofactor.

The catalysed reaction is 7-carboxy-7-deazaguanine + NH4(+) + ATP = 7-cyano-7-deazaguanine + ADP + phosphate + H2O + H(+). The protein operates within purine metabolism; 7-cyano-7-deazaguanine biosynthesis. Catalyzes the ATP-dependent conversion of 7-carboxy-7-deazaguanine (CDG) to 7-cyano-7-deazaguanine (preQ(0)). This chain is 7-cyano-7-deazaguanine synthase, found in Actinobacillus pleuropneumoniae serotype 7 (strain AP76).